We begin with the raw amino-acid sequence, 106 residues long: U1-lycotoxin-Ls1b (106 aa).

The N-terminal stretch at 1 to 19 (MKVLVVVALLVTLISYSSS) is a signal peptide. A propeptide spanning residues 20–40 (EGIDDLEADELLSLMANEQTR) is cleaved from the precursor. 4 cysteine pairs are disulfide-bonded: C43/C58, C50/C67, C57/C85, and C69/C83.

It belongs to the neurotoxin 19 (CSTX) family. 04 (U1-Lctx) subfamily. In terms of tissue distribution, expressed by the venom gland.

The protein localises to the secreted. The chain is U1-lycotoxin-Ls1b from Lycosa singoriensis (Wolf spider).